A 387-amino-acid chain; its full sequence is Bifunctional chorismate mutase/prephenate dehydratase (387 aa).

Positions 1 to 92 (MNPDNPLLAL…DSVLTQQALL (92 aa)) constitute a Chorismate mutase domain. 7 residues coordinate substrate: Arg-11, Arg-28, Lys-39, Asp-48, Glu-52, Ser-84, and Gln-88. In terms of domain architecture, Prephenate dehydratase spans 105–285 (RIAFLGPKGS…NHTRFIVLAR (181 aa)). The 78-residue stretch at 299–376 (TLIMATGQQA…RSLKVLGCYP (78 aa)) folds into the ACT domain.

It is found in the cytoplasm. The enzyme catalyses chorismate = prephenate. The catalysed reaction is prephenate + H(+) = 3-phenylpyruvate + CO2 + H2O. It functions in the pathway amino-acid biosynthesis; L-phenylalanine biosynthesis; phenylpyruvate from prephenate: step 1/1. Its pathway is metabolic intermediate biosynthesis; prephenate biosynthesis; prephenate from chorismate: step 1/1. Catalyzes the Claisen rearrangement of chorismate to prephenate and the decarboxylation/dehydration of prephenate to phenylpyruvate. This Enterobacter agglomerans (Erwinia herbicola) protein is Bifunctional chorismate mutase/prephenate dehydratase (pheA).